The following is a 161-amino-acid chain: Large ribosomal subunit protein uL11 (161 aa).

Belongs to the universal ribosomal protein uL11 family. In terms of assembly, part of the ribosomal stalk of the 50S ribosomal subunit. Interacts with L10 and the large rRNA to form the base of the stalk. L10 forms an elongated spine to which L12 dimers bind in a sequential fashion forming a multimeric L10(L12)X complex.

Its function is as follows. Forms part of the ribosomal stalk which helps the ribosome interact with GTP-bound translation factors. This chain is Large ribosomal subunit protein uL11, found in Methanosarcina acetivorans (strain ATCC 35395 / DSM 2834 / JCM 12185 / C2A).